The sequence spans 468 residues: Dimethylamine methyltransferase MtbB1 (468 aa).

Position 356 (pyrrolysine 356) is a non-standard amino acid, pyrrolysine.

It belongs to the dimethylamine methyltransferase family.

It carries out the reaction Co(I)-[dimethylamine-specific corrinoid protein] + dimethylamine + H(+) = methyl-Co(III)-[dimethylamine-specific corrinoid protein] + methylamine. It functions in the pathway one-carbon metabolism; methanogenesis from dimethylamine. In terms of biological role, catalyzes the transfer of a methyl group from dimethylamine to the corrinoid cofactor of MtbC. The polypeptide is Dimethylamine methyltransferase MtbB1 (mtbB1) (Methanosarcina mazei (strain ATCC BAA-159 / DSM 3647 / Goe1 / Go1 / JCM 11833 / OCM 88) (Methanosarcina frisia)).